Here is a 448-residue protein sequence, read N- to C-terminus: Tubulin alpha-2 chain (448 aa).

GTP contacts are provided by glutamine 11, glutamate 69, serine 138, glycine 142, threonine 143, threonine 177, asparagine 204, and asparagine 226. Glutamate 69 is a Mg(2+) binding site. The active site involves glutamate 252. Positions 428–448 (KDYEEVGADSNEGGEEEGEEY) are disordered. Over residues 429 to 448 (DYEEVGADSNEGGEEEGEEY) the composition is skewed to acidic residues.

It belongs to the tubulin family. In terms of assembly, dimer of alpha and beta chains. A typical microtubule is a hollow water-filled tube with an outer diameter of 25 nm and an inner diameter of 15 nM. Alpha-beta heterodimers associate head-to-tail to form protofilaments running lengthwise along the microtubule wall with the beta-tubulin subunit facing the microtubule plus end conferring a structural polarity. Microtubules usually have 13 protofilaments but different protofilament numbers can be found in some organisms and specialized cells. Mg(2+) serves as cofactor. In terms of processing, undergoes a tyrosination/detyrosination cycle, the cyclic removal and re-addition of a C-terminal tyrosine residue. In terms of tissue distribution, expressed in intestine, pharyngeal muscle cells, and a subset of neurons.

The protein resides in the cytoplasm. Its subcellular location is the cytoskeleton. The catalysed reaction is GTP + H2O = GDP + phosphate + H(+). Its function is as follows. Tubulin is the major constituent of microtubules, a cylinder consisting of laterally associated linear protofilaments composed of alpha- and beta-tubulin heterodimers. Microtubules grow by the addition of GTP-tubulin dimers to the microtubule end, where a stabilizing cap forms. Below the cap, tubulin dimers are in GDP-bound state, owing to GTPase activity of alpha-tubulin. Required for the normal dynamic behavior of the non-centrosomal microtubules in the epidermal syncytium. Involved in the redistribution of microtubule end-binding protein EB1/ebp-2 caused by wounding. Required to modulate expression in the epidermis of antimicrobial peptides, such as nlp-29, after wounding, or fungal infection. The polypeptide is Tubulin alpha-2 chain (tba-2) (Caenorhabditis elegans).